The chain runs to 722 residues: Endoglucanase F (722 aa).

The first 29 residues, 1–29, serve as a signal peptide directing secretion; the sequence is MSKNFKRVGAVAVAAAMSLSIMATTSINA. A disordered region spans residues 142–165; that stretch reads PEFQDPSKYPSPLDTSQPVGRDPI. Residues 154 to 165 show a composition bias toward polar residues; the sequence is LDTSQPVGRDPI. One can recognise a Dockerin domain in the interval 661-722; sequence PEKLLGDVNG…LLKKALLSIQ (62 aa).

It belongs to the glycosyl hydrolase 48 (cellulase L) family.

It carries out the reaction Endohydrolysis of (1-&gt;4)-beta-D-glucosidic linkages in cellulose, lichenin and cereal beta-D-glucans.. In terms of biological role, probable endoglucanase involved in the degradation of cellulose or related beta-glucans. This chain is Endoglucanase F (celCCF), found in Ruminiclostridium cellulolyticum (strain ATCC 35319 / DSM 5812 / JCM 6584 / H10) (Clostridium cellulolyticum).